The chain runs to 458 residues: Probable multidrug resistance protein NorM (458 aa).

Helical transmembrane passes span 14–34, 56–76, 97–117, 134–154, 164–184, 196–216, 241–261, 283–303, 320–340, 353–373, 389–409, and 415–435; these read FLVV…MNFF, LWVP…PIIA, LSIA…DPIL, LIGL…RCLI, MFIT…LIFG, AGYA…VVVV, ILLL…IFAA, FASF…IAVG, LGIT…YVLR, VAWL…SDAL, VPFV…GYLL, and LGPY…AIAL.

The protein belongs to the multi antimicrobial extrusion (MATE) (TC 2.A.66.1) family.

The protein resides in the cell membrane. Functionally, multidrug efflux pump. This is Probable multidrug resistance protein NorM (norM) from Halalkalibacterium halodurans (strain ATCC BAA-125 / DSM 18197 / FERM 7344 / JCM 9153 / C-125) (Bacillus halodurans).